A 941-amino-acid polypeptide reads, in one-letter code: Cell wall protein IFF3 (941 aa).

A signal peptide spans 1-20 (MQLFQNILVSIALLTQVVFA). Asn-36, Asn-367, Asn-686, Asn-732, Asn-790, Asn-818, Asn-825, Asn-884, and Asn-917 each carry an N-linked (GlcNAc...) asparagine glycan. Asn-917 is lipidated: GPI-anchor amidated asparagine. Residues 918–941 (GSNKESIENIKYLTLVVFGLMMFM) constitute a propeptide, removed in mature form.

Belongs to the HYR1/IFF family. The GPI-anchor is attached to the protein in the endoplasmic reticulum and serves to target the protein to the cell surface. There, the glucosamine-inositol phospholipid moiety is cleaved off and the GPI-modified mannoprotein is covalently attached via its lipidless GPI glycan remnant to the 1,6-beta-glucan of the outer cell wall layer.

Its subcellular location is the secreted. It localises to the cell wall. The protein resides in the membrane. Its function is as follows. GPI-anchored cell wall protein involved in cell wall organization, hyphal growth, as well as in host-fungal interaction and virulence. In Candida albicans (strain SC5314 / ATCC MYA-2876) (Yeast), this protein is Cell wall protein IFF3 (IFF3).